The chain runs to 117 residues: Large ribosomal subunit protein bL20 (117 aa).

Belongs to the bacterial ribosomal protein bL20 family.

In terms of biological role, binds directly to 23S ribosomal RNA and is necessary for the in vitro assembly process of the 50S ribosomal subunit. It is not involved in the protein synthesizing functions of that subunit. The chain is Large ribosomal subunit protein bL20 from Glaesserella parasuis serovar 5 (strain SH0165) (Haemophilus parasuis).